The chain runs to 88 residues: Small ribosomal subunit protein bS20 (88 aa).

2 disordered regions span residues 1–25 (MANSPQAKKRARQNERRFAINKARR) and 61–88 (GVTKGVMHKNTAARKMSRLSSRVKALGA).

Belongs to the bacterial ribosomal protein bS20 family.

Functionally, binds directly to 16S ribosomal RNA. This chain is Small ribosomal subunit protein bS20, found in Jannaschia sp. (strain CCS1).